Reading from the N-terminus, the 337-residue chain is Biotin synthase (337 aa).

One can recognise a Radical SAM core domain in the interval 55–284; it reads YFKNTIELCS…KKTILLAGGK (230 aa). Positions 73, 77, and 80 each coordinate [4Fe-4S] cluster. Cys117, Cys149, and Cys209 together coordinate [2Fe-2S] cluster.

Belongs to the radical SAM superfamily. Biotin synthase family. As to quaternary structure, homodimer. Requires [4Fe-4S] cluster as cofactor. [2Fe-2S] cluster is required as a cofactor.

It catalyses the reaction (4R,5S)-dethiobiotin + (sulfur carrier)-SH + 2 reduced [2Fe-2S]-[ferredoxin] + 2 S-adenosyl-L-methionine = (sulfur carrier)-H + biotin + 2 5'-deoxyadenosine + 2 L-methionine + 2 oxidized [2Fe-2S]-[ferredoxin]. The protein operates within cofactor biosynthesis; biotin biosynthesis; biotin from 7,8-diaminononanoate: step 2/2. Functionally, catalyzes the conversion of dethiobiotin (DTB) to biotin by the insertion of a sulfur atom into dethiobiotin via a radical-based mechanism. The chain is Biotin synthase from Caldicellulosiruptor bescii (strain ATCC BAA-1888 / DSM 6725 / KCTC 15123 / Z-1320) (Anaerocellum thermophilum).